Here is a 322-residue protein sequence, read N- to C-terminus: DNA primase small subunit PriS (322 aa).

Catalysis depends on residues aspartate 100, aspartate 102, and aspartate 228.

Belongs to the eukaryotic-type primase small subunit family. In terms of assembly, heterodimer of a small subunit (PriS) and a large subunit (PriL). Mg(2+) serves as cofactor. The cofactor is Mn(2+).

Its function is as follows. Catalytic subunit of DNA primase, an RNA polymerase that catalyzes the synthesis of short RNA molecules used as primers for DNA polymerase during DNA replication. The small subunit contains the primase catalytic core and has DNA synthesis activity on its own. Binding to the large subunit stabilizes and modulates the activity, increasing the rate of DNA synthesis while decreasing the length of the DNA fragments, and conferring RNA synthesis capability. The DNA polymerase activity may enable DNA primase to also catalyze primer extension after primer synthesis. May also play a role in DNA repair. In Sulfolobus acidocaldarius (strain ATCC 33909 / DSM 639 / JCM 8929 / NBRC 15157 / NCIMB 11770), this protein is DNA primase small subunit PriS.